Reading from the N-terminus, the 292-residue chain is Hydroxysqualene synthase (292 aa).

It belongs to the phytoene/squalene synthase family. HpnC subfamily.

The catalysed reaction is presqualene diphosphate + H2O = hydroxysqualene + diphosphate. The protein operates within secondary metabolite biosynthesis; hopanoid biosynthesis. In terms of biological role, involved in the biosynthesis of the hopanoid precursor squalene (SQ) from farnesyl diphosphate (FPP). Catalyzes the second step, the conversion of presqualene diphosphate (PSPP) to hydroxysqualene (HSQ). The polypeptide is Hydroxysqualene synthase (Rhodopseudomonas palustris (strain ATCC BAA-98 / CGA009)).